We begin with the raw amino-acid sequence, 452 residues long: Phosphoglucosamine mutase (452 aa).

S104 acts as the Phosphoserine intermediate in catalysis. Mg(2+) is bound by residues S104, D244, D246, and D248. S104 is modified (phosphoserine).

Belongs to the phosphohexose mutase family. Requires Mg(2+) as cofactor. In terms of processing, activated by phosphorylation.

It carries out the reaction alpha-D-glucosamine 1-phosphate = D-glucosamine 6-phosphate. In terms of biological role, catalyzes the conversion of glucosamine-6-phosphate to glucosamine-1-phosphate. The sequence is that of Phosphoglucosamine mutase from Pediococcus pentosaceus (strain ATCC 25745 / CCUG 21536 / LMG 10740 / 183-1w).